A 78-amino-acid chain; its full sequence is Large ribosomal subunit protein bL28 (78 aa).

The interval 1 to 25 is disordered; the sequence is MSRVCQVTGKRPAVGNNRSHAKNAT.

Belongs to the bacterial ribosomal protein bL28 family.

In Aliivibrio salmonicida (strain LFI1238) (Vibrio salmonicida (strain LFI1238)), this protein is Large ribosomal subunit protein bL28.